Reading from the N-terminus, the 628-residue chain is 2-oxoacid:ferredoxin oxidoreductase 2, subunit alpha (628 aa).

Positions 254–258 (YPITP) match the YPITP motif motif. The substrate site is built by Thr-257 and Arg-344.

Heterodimer composed of an alpha and a beta subunit.

It catalyses the reaction a 2-oxocarboxylate + 2 oxidized [2Fe-2S]-[ferredoxin] + CoA = an acyl-CoA + 2 reduced [2Fe-2S]-[ferredoxin] + CO2 + H(+). Catalyzes the coenzyme A-dependent oxidative decarboxylation of different 2-oxoacids such as 2-oxoglutarate, pyruvate and 2-oxobutyrate to form their CoA derivatives. The polypeptide is 2-oxoacid:ferredoxin oxidoreductase 2, subunit alpha (Sulfurisphaera tokodaii (strain DSM 16993 / JCM 10545 / NBRC 100140 / 7) (Sulfolobus tokodaii)).